A 233-amino-acid polypeptide reads, in one-letter code: 5'-methylthioadenosine/S-adenosylhomocysteine nucleosidase (233 aa).

Glu-12 (proton acceptor) is an active-site residue. Residues Gly-78, Ile-156, and Met-177 to Glu-178 contribute to the substrate site. The active-site Proton donor is the Asp-201.

It belongs to the PNP/UDP phosphorylase family. MtnN subfamily.

It catalyses the reaction S-adenosyl-L-homocysteine + H2O = S-(5-deoxy-D-ribos-5-yl)-L-homocysteine + adenine. The enzyme catalyses S-methyl-5'-thioadenosine + H2O = 5-(methylsulfanyl)-D-ribose + adenine. It carries out the reaction 5'-deoxyadenosine + H2O = 5-deoxy-D-ribose + adenine. Its pathway is amino-acid biosynthesis; L-methionine biosynthesis via salvage pathway; S-methyl-5-thio-alpha-D-ribose 1-phosphate from S-methyl-5'-thioadenosine (hydrolase route): step 1/2. Functionally, catalyzes the irreversible cleavage of the glycosidic bond in both 5'-methylthioadenosine (MTA) and S-adenosylhomocysteine (SAH/AdoHcy) to adenine and the corresponding thioribose, 5'-methylthioribose and S-ribosylhomocysteine, respectively. Also cleaves 5'-deoxyadenosine, a toxic by-product of radical S-adenosylmethionine (SAM) enzymes, into 5-deoxyribose and adenine. The polypeptide is 5'-methylthioadenosine/S-adenosylhomocysteine nucleosidase (Listeria monocytogenes serotype 4b (strain F2365)).